We begin with the raw amino-acid sequence, 403 residues long: Imidazolonepropionase (403 aa).

The Fe(3+) site is built by His-68 and His-70. His-68 and His-70 together coordinate Zn(2+). Arg-77, Tyr-140, and His-173 together coordinate 4-imidazolone-5-propanoate. Tyr-140 contacts N-formimidoyl-L-glutamate. His-238 is a binding site for Fe(3+). Zn(2+) is bound at residue His-238. Gln-241 is a binding site for 4-imidazolone-5-propanoate. Asp-313 lines the Fe(3+) pocket. Asp-313 lines the Zn(2+) pocket. The N-formimidoyl-L-glutamate site is built by Asn-315 and Gly-317. Thr-318 lines the 4-imidazolone-5-propanoate pocket.

It belongs to the metallo-dependent hydrolases superfamily. HutI family. Zn(2+) serves as cofactor. The cofactor is Fe(3+).

Its subcellular location is the cytoplasm. It catalyses the reaction 4-imidazolone-5-propanoate + H2O = N-formimidoyl-L-glutamate. It participates in amino-acid degradation; L-histidine degradation into L-glutamate; N-formimidoyl-L-glutamate from L-histidine: step 3/3. In terms of biological role, catalyzes the hydrolytic cleavage of the carbon-nitrogen bond in imidazolone-5-propanoate to yield N-formimidoyl-L-glutamate. It is the third step in the universal histidine degradation pathway. This chain is Imidazolonepropionase, found in Psychromonas ingrahamii (strain DSM 17664 / CCUG 51855 / 37).